Reading from the N-terminus, the 1349-residue chain is Zinc finger protein 804B (1349 aa).

A C2H2-type zinc finger spans residues 55–79 (FYCELCDKQYHKHQEFDNHINSYDH). Positions 985–1010 (YASESRNDQDSAIPRTTEKDKSKSSH) are disordered.

The protein is Zinc finger protein 804B (ZNF804B) of Homo sapiens (Human).